The primary structure comprises 361 residues: Peroxidase A (361 aa).

Belongs to the peroxidase family. Partially N-glycosylated.

It localises to the secreted. It catalyses the reaction 2 a phenolic donor + H2O2 = 2 a phenolic radical donor + 2 H2O. The sequence is that of Peroxidase A from Aloe vera (Aloe).